A 364-amino-acid chain; its full sequence is Guanine nucleotide-binding protein alpha-6 subunit (364 aa).

Positions 1 to 29 are disordered; it reads MGAGATGLRGARLSPEERANSSKSRAIDR. Residue Gly-2 is the site of N-myristoyl glycine attachment. Positions 14-29 are enriched in basic and acidic residues; sequence SPEERANSSKSRAIDR. Residues 40–363 form the G-alpha domain; sequence NRFKILLLGT…NENLRSAGLH (324 aa). The segment at 43-56 is G1 motif; that stretch reads KILLLGTAESGKST. Residues 48–55, 186–192, 211–215, 280–283, and Ala-335 contribute to the GTP site; these read GTAESGKS, VHCRIST, DVGGQ, and NKYD. Mg(2+) is bound by residues Ser-55 and Thr-192. A G2 motif region spans residues 184 to 192; that stretch reads DIVHCRIST. Residues 207-216 form a G3 motif region; that stretch reads FKMVDVGGQR. Positions 276–283 are G4 motif; sequence VLFLNKYD. The interval 333-338 is G5 motif; it reads TTATDT.

The protein belongs to the G-alpha family. G proteins are composed of 3 units; alpha, beta and gamma. The alpha chain contains the guanine nucleotide binding site.

Functionally, guanine nucleotide-binding proteins (G proteins) are involved as modulators or transducers in various transmembrane signaling systems. This Caenorhabditis elegans protein is Guanine nucleotide-binding protein alpha-6 subunit (gpa-6).